Here is a 1171-residue protein sequence, read N- to C-terminus: DNA-directed RNA polymerase subunit beta' (1171 aa).

The Zn(2+) site is built by C60, C62, C75, and C78. A disordered region spans residues 299–319 (GRRGKPVTGPGNRPLKSLSDM). Mg(2+) contacts are provided by D449, D451, and D453. Zn(2+)-binding residues include C790, C864, C871, and C874.

Belongs to the RNA polymerase beta' chain family. As to quaternary structure, the RNAP catalytic core consists of 2 alpha, 1 beta, 1 beta' and 1 omega subunit. When a sigma factor is associated with the core the holoenzyme is formed, which can initiate transcription. It depends on Mg(2+) as a cofactor. Requires Zn(2+) as cofactor.

The enzyme catalyses RNA(n) + a ribonucleoside 5'-triphosphate = RNA(n+1) + diphosphate. Functionally, DNA-dependent RNA polymerase catalyzes the transcription of DNA into RNA using the four ribonucleoside triphosphates as substrates. The sequence is that of DNA-directed RNA polymerase subunit beta' from Alkaliphilus metalliredigens (strain QYMF).